The sequence spans 988 residues: Isoleucine--tRNA ligase (988 aa).

Residues P60–H70 carry the 'HIGH' region motif. Residue E570 coordinates L-isoleucyl-5'-AMP. The 'KMSKS' region motif lies at K611 to S615. Position 614 (K614) interacts with ATP. Zn(2+)-binding residues include C957, C960, C977, and C980.

Belongs to the class-I aminoacyl-tRNA synthetase family. IleS type 1 subfamily. As to quaternary structure, monomer. Zn(2+) serves as cofactor.

It is found in the cytoplasm. The enzyme catalyses tRNA(Ile) + L-isoleucine + ATP = L-isoleucyl-tRNA(Ile) + AMP + diphosphate. Functionally, catalyzes the attachment of isoleucine to tRNA(Ile). As IleRS can inadvertently accommodate and process structurally similar amino acids such as valine, to avoid such errors it has two additional distinct tRNA(Ile)-dependent editing activities. One activity is designated as 'pretransfer' editing and involves the hydrolysis of activated Val-AMP. The other activity is designated 'posttransfer' editing and involves deacylation of mischarged Val-tRNA(Ile). This is Isoleucine--tRNA ligase from Synechocystis sp. (strain ATCC 27184 / PCC 6803 / Kazusa).